Reading from the N-terminus, the 148-residue chain is D-aminoacyl-tRNA deacylase (148 aa).

Positions 137-138 (GP) match the Gly-cisPro motif, important for rejection of L-amino acids motif.

It belongs to the DTD family. Homodimer.

The protein resides in the cytoplasm. The catalysed reaction is glycyl-tRNA(Ala) + H2O = tRNA(Ala) + glycine + H(+). It catalyses the reaction a D-aminoacyl-tRNA + H2O = a tRNA + a D-alpha-amino acid + H(+). Its function is as follows. An aminoacyl-tRNA editing enzyme that deacylates mischarged D-aminoacyl-tRNAs. Also deacylates mischarged glycyl-tRNA(Ala), protecting cells against glycine mischarging by AlaRS. Acts via tRNA-based rather than protein-based catalysis; rejects L-amino acids rather than detecting D-amino acids in the active site. By recycling D-aminoacyl-tRNA to D-amino acids and free tRNA molecules, this enzyme counteracts the toxicity associated with the formation of D-aminoacyl-tRNA entities in vivo and helps enforce protein L-homochirality. This chain is D-aminoacyl-tRNA deacylase, found in Lactiplantibacillus plantarum (strain ATCC BAA-793 / NCIMB 8826 / WCFS1) (Lactobacillus plantarum).